Reading from the N-terminus, the 82-residue chain is RNA-binding protein Hfq (82 aa).

In terms of domain architecture, Sm spans 9–69; that stretch reads DQLLNTARKD…ISTIIPAKII (61 aa).

This sequence belongs to the Hfq family. As to quaternary structure, homohexamer.

Its function is as follows. RNA chaperone that binds small regulatory RNA (sRNAs) and mRNAs to facilitate mRNA translational regulation in response to envelope stress, environmental stress and changes in metabolite concentrations. Also binds with high specificity to tRNAs. This Leptospira borgpetersenii serovar Hardjo-bovis (strain L550) protein is RNA-binding protein Hfq.